Consider the following 536-residue polypeptide: MFS-type efflux pump MFS1 (536 aa).

3 consecutive transmembrane segments (helical) span residues 30–50 (VTGL…LLVA), 80–100 (YLLT…FFPV), and 102–122 (WVFL…GAAP). Asn123 carries N-linked (GlcNAc...) asparagine glycosylation. 3 consecutive transmembrane segments (helical) span residues 133–153 (VAGI…AYSI), 163–183 (GAIG…GGAF), and 191–211 (WCFY…LIFL). The N-linked (GlcNAc...) asparagine glycan is linked to Asn221. Helical transmembrane passes span 234 to 254 (IGTA…QWGG), 264 to 284 (IIAL…FQIR), 306 to 326 (FFLF…PIWF), 342 to 362 (IPMV…VTAI), 366 to 386 (APLY…LTTF), 400 to 420 (IIFG…AQAV), 426 to 446 (VAVG…LFVS), and 503 to 523 (TWYV…GMEW).

The protein belongs to the major facilitator superfamily. TCR/Tet family.

Its subcellular location is the cell membrane. Functionally, MFS-type efflux pump involved in the modulation susceptibility to azoles, including fluconazole, itraconazole, miconazole and voriconazole. Also confers increased resistance chloramphenicol and thiamphenicol, suggesting that it acts as a pleiotropic drug transporter with a broad substrate spectrum. Finally, increases the tolerance to cycloheximide when expressed in S.cerevisiae, but not in dermatophyte species. This chain is MFS-type efflux pump MFS1, found in Arthroderma benhamiae (strain ATCC MYA-4681 / CBS 112371) (Trichophyton mentagrophytes).